The following is a 332-amino-acid chain: Adenosine deaminase (332 aa).

Zn(2+)-binding residues include H12 and H14. Residues H14, D16, and G170 each contribute to the substrate site. H197 lines the Zn(2+) pocket. E200 acts as the Proton donor in catalysis. Zn(2+) is bound at residue D278. D279 is a substrate binding site.

It belongs to the metallo-dependent hydrolases superfamily. Adenosine and AMP deaminases family. Adenosine deaminase subfamily. It depends on Zn(2+) as a cofactor.

It carries out the reaction adenosine + H2O + H(+) = inosine + NH4(+). It catalyses the reaction 2'-deoxyadenosine + H2O + H(+) = 2'-deoxyinosine + NH4(+). In terms of biological role, catalyzes the hydrolytic deamination of adenosine and 2-deoxyadenosine. The protein is Adenosine deaminase of Serratia proteamaculans (strain 568).